Here is a 519-residue protein sequence, read N- to C-terminus: 2,3-bisphosphoglycerate-independent phosphoglycerate mutase (519 aa).

Positions 18 and 68 each coordinate Mn(2+). The active-site Phosphoserine intermediate is Ser-68. Substrate-binding positions include His-129, 159–160 (RD), Arg-191, Arg-197, 267–270 (RADR), and Lys-341. Mn(2+) is bound by residues Asp-408, His-412, Asp-449, His-450, and His-468.

Belongs to the BPG-independent phosphoglycerate mutase family. In terms of assembly, monomer. Requires Mn(2+) as cofactor.

The enzyme catalyses (2R)-2-phosphoglycerate = (2R)-3-phosphoglycerate. It functions in the pathway carbohydrate degradation; glycolysis; pyruvate from D-glyceraldehyde 3-phosphate: step 3/5. Its function is as follows. Catalyzes the interconversion of 2-phosphoglycerate and 3-phosphoglycerate. The chain is 2,3-bisphosphoglycerate-independent phosphoglycerate mutase from Coxiella burnetii (strain Dugway 5J108-111).